The chain runs to 1021 residues: Probable calcium-transporting ATPase 6, plasma membrane-type (1021 aa).

At 1-155 (MEGGRSWSIE…RSFWMFVWDA (155 aa)) the chain is on the cytoplasmic side. The next 2 membrane-spanning stretches (helical) occupy residues 156 to 176 (LHDL…VVGL) and 181 to 201 (WPMG…VVLV). The Cytoplasmic portion of the chain corresponds to 202–241 (TATSDYQQARKFMELDREKQKIYIRVTRDKKTKEVLVHDL). 2 helical membrane-spanning segments follow: residues 242 to 262 (VVGD…GLFI) and 338 to 358 (VATI…LVLL). At 359–384 (ARFLADKGMHVGLLNWSANDALTIVN) the chain is on the cytoplasmic side. The chain crosses the membrane as a helical span at residues 385 to 405 (YFAIAVTIIVVAVPEGLPLAV). Aspartate 441 (4-aspartylphosphate intermediate) is an active-site residue. The Mg(2+) site is built by aspartate 740 and aspartate 744. A helical transmembrane segment spans residues 807 to 827 (IVALIVNFVSACIIGSAPLTA). The Cytoplasmic portion of the chain corresponds to 828–829 (VQ). 2 helical membrane-spanning segments follow: residues 830-850 (LLWV…TEPP) and 879-899 (GLYQ…LLSI). Topologically, residues 900–942 (EGPQSDKTINTLIFNSFVFCQVFNEINCREMEKINVLQGIFRN) are cytoplasmic. The next 2 helical transmembrane spans lie at 943–963 (WIFV…VEFL) and 974–994 (GELW…SVIL). At 995-1021 (KCIPVEFNKTNTKPHGYELIPEGPEIL) the chain is on the cytoplasmic side.

This sequence belongs to the cation transport ATPase (P-type) (TC 3.A.3) family. Type IIB subfamily.

The protein resides in the membrane. It carries out the reaction Ca(2+)(in) + ATP + H2O = Ca(2+)(out) + ADP + phosphate + H(+). With respect to regulation, activated by calmodulin. Its function is as follows. This magnesium-dependent enzyme catalyzes the hydrolysis of ATP coupled with the translocation of calcium from the cytosol out of the cell, into the endoplasmic reticulum, or into organelles. This chain is Probable calcium-transporting ATPase 6, plasma membrane-type, found in Oryza sativa subsp. japonica (Rice).